A 461-amino-acid chain; its full sequence is Fumarate hydratase class II (461 aa).

Substrate is bound by residues 97–99 (SGT), 127–130 (HPND), 137–139 (SSN), and T185. H186 (proton donor/acceptor) is an active-site residue. S316 is an active-site residue. Residues S317 and 322-324 (KVN) contribute to the substrate site.

This sequence belongs to the class-II fumarase/aspartase family. Fumarase subfamily. Homotetramer.

The protein localises to the cytoplasm. It catalyses the reaction (S)-malate = fumarate + H2O. The protein operates within carbohydrate metabolism; tricarboxylic acid cycle; (S)-malate from fumarate: step 1/1. Functionally, involved in the TCA cycle. Catalyzes the stereospecific interconversion of fumarate to L-malate. This Staphylococcus saprophyticus subsp. saprophyticus (strain ATCC 15305 / DSM 20229 / NCIMB 8711 / NCTC 7292 / S-41) protein is Fumarate hydratase class II.